The primary structure comprises 454 residues: Glutamate mutase epsilon subunit (454 aa).

Arg67 is an L-glutamate binding site. Adenosylcob(III)alamin is bound at residue Gly69. Arg99 lines the L-glutamate pocket. Asn122 contacts adenosylcob(III)alamin. L-glutamate-binding positions include 148-149 (RH), Glu170, and Tyr176. Pro179 is an adenosylcob(III)alamin binding site. Tyr180 lines the L-glutamate pocket. Phe296, Lys325, Glu329, and Ile333 together coordinate adenosylcob(III)alamin.

The protein belongs to the methylaspartate mutase GlmE subunit family. As to quaternary structure, heterotetramer composed of 2 epsilon subunits (GlmE) and 2 sigma subunits (GlmS). GlmE exists as a homodimer and GlmS as a monomer. Adenosylcob(III)alamin serves as cofactor.

The enzyme catalyses (2S,3S)-3-methyl-L-aspartate = L-glutamate. Its pathway is amino-acid degradation; L-glutamate degradation via mesaconate pathway; acetate and pyruvate from L-glutamate: step 1/4. In terms of biological role, catalyzes the carbon skeleton rearrangement of L-glutamate to L-threo-3-methylaspartate ((2S,3S)-3-methylaspartate). The polypeptide is Glutamate mutase epsilon subunit (Shigella dysenteriae serotype 1 (strain Sd197)).